The chain runs to 648 residues: Phosphatidylinositol polyphosphate 5-phosphatase type IV (648 aa).

The tract at residues 1 to 64 (MPSKSACLRH…PLSMPAKPSN (64 aa)) is disordered. Polar residues predominate over residues 36 to 54 (TSASLPAADSQSSQTNSMP). 2 consecutive repeat copies span residues 59–62 (PAKP) and 76–79 (PQPP). Positions 59 to 243 (PAKPSNQNLQ…AHSNLGPSRP (185 aa)) are 4 X 4 AA repeats of P-X-X-P. Residues 99–158 (RFRGSQEDLTVQNGASPCRGSLQDSVAQSPAYSRPLPCLSTSLQEIPKPRRATGSEGGSP) form a disordered region. Phosphoserine is present on S103. Residues 120 to 129 (LQDSVAQSPA) are compositionally biased toward polar residues. Repeat unit 3 spans residues 147 to 150 (PRRA). T197 is subject to Phosphothreonine. Copy 4 of the repeat occupies 240-243 (PSRP). S245 and S260 each carry phosphoserine. C645 bears the Cysteine methyl ester mark. The S-farnesyl cysteine moiety is linked to residue C645. The propeptide at 646-648 (TVS) is removed in mature form.

This sequence belongs to the inositol 1,4,5-trisphosphate 5-phosphatase type IV family. In terms of assembly, interacts (when prenylated) with PDE6D; this is important for normal location in cilia.

Its subcellular location is the cytoplasm. The protein resides in the cytoskeleton. The protein localises to the cilium axoneme. It localises to the golgi apparatus. It is found in the golgi stack membrane. Its subcellular location is the cell membrane. The protein resides in the cell projection. The protein localises to the ruffle. It localises to the nucleus. The enzyme catalyses a 1,2-diacyl-sn-glycero-3-phospho-(1D-myo-inositol-4,5-bisphosphate) + H2O = a 1,2-diacyl-sn-glycero-3-phospho-(1D-myo-inositol 4-phosphate) + phosphate. It carries out the reaction a 1,2-diacyl-sn-glycero-3-phospho-(1D-myo-inositol-3,4,5-trisphosphate) + H2O = a 1,2-diacyl-sn-glycero-3-phospho-(1D-myo-inositol-3,4-bisphosphate) + phosphate. The catalysed reaction is a 1,2-diacyl-sn-glycero-3-phospho-(1D-myo-inositol-3,5-bisphosphate) + H2O = a 1,2-diacyl-sn-glycero-3-phospho-(1D-myo-inositol-3-phosphate) + phosphate. Its function is as follows. Phosphatidylinositol (PtdIns) phosphatase that specifically hydrolyzes the 5-phosphate of phosphatidylinositol-3,4,5-trisphosphate (PtdIns(3,4,5)P3), phosphatidylinositol 4,5-bisphosphate PtdIns (4,5)P2 and phosphatidylinositol 3,5-bisphosphate (PtdIns(3,5)P2). Specific for lipid substrates, inactive towards water soluble inositol phosphates. Plays an essential role in the primary cilium by controlling ciliary growth and phosphoinositide 3-kinase (PI3K) signaling and stability. This chain is Phosphatidylinositol polyphosphate 5-phosphatase type IV (Inpp5e), found in Rattus norvegicus (Rat).